A 362-amino-acid chain; its full sequence is Transcription factor bHLH133 (362 aa).

In terms of domain architecture, bHLH spans 209-258 (LQVPSSQSTLKVRKEKLGGRIASLHQLVSPFGKTDTASVLSEAIGYIRFL).

This sequence belongs to the bHLH protein family. As to quaternary structure, homodimer.

The protein resides in the nucleus. The polypeptide is Transcription factor bHLH133 (BHLH133) (Arabidopsis thaliana (Mouse-ear cress)).